The primary structure comprises 294 residues: ATP synthase gamma chain (294 aa).

Belongs to the ATPase gamma chain family. As to quaternary structure, F-type ATPases have 2 components, CF(1) - the catalytic core - and CF(0) - the membrane proton channel. CF(1) has five subunits: alpha(3), beta(3), gamma(1), delta(1), epsilon(1). CF(0) has three main subunits: a, b and c.

It is found in the cell membrane. In terms of biological role, produces ATP from ADP in the presence of a proton gradient across the membrane. The gamma chain is believed to be important in regulating ATPase activity and the flow of protons through the CF(0) complex. The protein is ATP synthase gamma chain of Ruminiclostridium cellulolyticum (strain ATCC 35319 / DSM 5812 / JCM 6584 / H10) (Clostridium cellulolyticum).